The following is a 225-amino-acid chain: Holliday junction branch migration complex subunit RuvA (225 aa).

The tract at residues 1-71 (MISWINGELV…EDSDLLFGFT (71 aa)) is domain I. The domain II stretch occupies residues 72-150 (SKDQKFFFIE…SKIQIEEEKG (79 aa)). The flexible linker stretch occupies residues 151-161 (QEEFEITNPEI). The domain III stretch occupies residues 161–225 (IYKLMEDLQL…LDQGNSNLAR (65 aa)).

This sequence belongs to the RuvA family. In terms of assembly, homotetramer. Forms an RuvA(8)-RuvB(12)-Holliday junction (HJ) complex. HJ DNA is sandwiched between 2 RuvA tetramers; dsDNA enters through RuvA and exits via RuvB. An RuvB hexamer assembles on each DNA strand where it exits the tetramer. Each RuvB hexamer is contacted by two RuvA subunits (via domain III) on 2 adjacent RuvB subunits; this complex drives branch migration. In the full resolvosome a probable DNA-RuvA(4)-RuvB(12)-RuvC(2) complex forms which resolves the HJ.

Its subcellular location is the cytoplasm. In terms of biological role, the RuvA-RuvB-RuvC complex processes Holliday junction (HJ) DNA during genetic recombination and DNA repair, while the RuvA-RuvB complex plays an important role in the rescue of blocked DNA replication forks via replication fork reversal (RFR). RuvA specifically binds to HJ cruciform DNA, conferring on it an open structure. The RuvB hexamer acts as an ATP-dependent pump, pulling dsDNA into and through the RuvAB complex. HJ branch migration allows RuvC to scan DNA until it finds its consensus sequence, where it cleaves and resolves the cruciform DNA. This Prochlorococcus marinus (strain MIT 9215) protein is Holliday junction branch migration complex subunit RuvA.